Here is a 207-residue protein sequence, read N- to C-terminus: Granulocyte colony-stimulating factor (207 aa).

An N-terminal signal peptide occupies residues 1–30 (MAGPATQSPMKLMALQLLLWHSALWTVQEA). 2 disulfides stabilise this stretch: Cys-69–Cys-75 and Cys-97–Cys-107. A glycan (O-linked (GalNAc...) threonine) is linked at Thr-166.

The protein belongs to the IL-6 superfamily. Monomer. Post-translationally, O-glycan consists of Gal-GalNAc disaccharide which can be modified with up to two sialic acid residues (done in recombinantly expressed G-CSF from CHO cells).

Its subcellular location is the secreted. Functionally, granulocyte/macrophage colony-stimulating factors are cytokines that act in hematopoiesis by controlling the production, differentiation, and function of 2 related white cell populations of the blood, the granulocytes and the monocytes-macrophages. This CSF induces granulocytes. The sequence is that of Granulocyte colony-stimulating factor (CSF3) from Homo sapiens (Human).